The sequence spans 229 residues: Cytochrome c oxidase subunit 2 (229 aa).

The Mitochondrial intermembrane segment spans residues 1 to 26; sequence MATWAQFGLQDASSPLMEELTYFHDY. Residues 27–48 traverse the membrane as a helical segment; the sequence is ALIVLTLITILVFYGLVSLLLS. Residues 49-62 are Mitochondrial matrix-facing; the sequence is SSTNRFFLEGQELE. The helical transmembrane segment at 63–82 threads the bilayer; it reads TIWTVVPAFILIFIALPSLQ. The Mitochondrial intermembrane portion of the chain corresponds to 83–229; sequence LLYLMDEVNN…ENWVAQYIEE (147 aa). H161, C196, E198, C200, H204, and M207 together coordinate Cu cation. Residue E198 participates in Mg(2+) binding.

Belongs to the cytochrome c oxidase subunit 2 family. In terms of assembly, component of the cytochrome c oxidase (complex IV, CIV), a multisubunit enzyme composed of a catalytic core of 3 subunits and several supernumerary subunits. The complex exists as a monomer or a dimer and forms supercomplexes (SCs) in the inner mitochondrial membrane with ubiquinol-cytochrome c oxidoreductase (cytochrome b-c1 complex, complex III, CIII). Cu cation is required as a cofactor.

The protein resides in the mitochondrion inner membrane. It carries out the reaction 4 Fe(II)-[cytochrome c] + O2 + 8 H(+)(in) = 4 Fe(III)-[cytochrome c] + 2 H2O + 4 H(+)(out). Its function is as follows. Component of the cytochrome c oxidase, the last enzyme in the mitochondrial electron transport chain which drives oxidative phosphorylation. The respiratory chain contains 3 multisubunit complexes succinate dehydrogenase (complex II, CII), ubiquinol-cytochrome c oxidoreductase (cytochrome b-c1 complex, complex III, CIII) and cytochrome c oxidase (complex IV, CIV), that cooperate to transfer electrons derived from NADH and succinate to molecular oxygen, creating an electrochemical gradient over the inner membrane that drives transmembrane transport and the ATP synthase. Cytochrome c oxidase is the component of the respiratory chain that catalyzes the reduction of oxygen to water. Electrons originating from reduced cytochrome c in the intermembrane space (IMS) are transferred via the dinuclear copper A center (CU(A)) of subunit 2 and heme A of subunit 1 to the active site in subunit 1, a binuclear center (BNC) formed by heme A3 and copper B (CU(B)). The BNC reduces molecular oxygen to 2 water molecules using 4 electrons from cytochrome c in the IMS and 4 protons from the mitochondrial matrix. This is Cytochrome c oxidase subunit 2 (COII) from Paracentrotus lividus (Common sea urchin).